The sequence spans 86 residues: Small ribosomal subunit protein bS20 (86 aa).

Belongs to the bacterial ribosomal protein bS20 family.

Binds directly to 16S ribosomal RNA. This Rhodococcus jostii (strain RHA1) protein is Small ribosomal subunit protein bS20.